A 264-amino-acid polypeptide reads, in one-letter code: Phosphonoacetaldehyde hydrolase (264 aa).

D9 functions as the Nucleophile in the catalytic mechanism. Positions 9 and 11 each coordinate Mg(2+). K50 functions as the Schiff-base intermediate with substrate in the catalytic mechanism. D183 is a binding site for Mg(2+).

It belongs to the HAD-like hydrolase superfamily. PhnX family. As to quaternary structure, homodimer. It depends on Mg(2+) as a cofactor.

It carries out the reaction phosphonoacetaldehyde + H2O = acetaldehyde + phosphate + H(+). Functionally, involved in phosphonate degradation. The protein is Phosphonoacetaldehyde hydrolase of Bacillus cereus (strain ATCC 10987 / NRS 248).